The chain runs to 458 residues: MALWGGRFKQEADAKFKFFNDSLRFDYRLALQDIDGSIGWAKAITSVGILTEQEHQQLVVALKELRAEIEPNIAIILRDDAEDIHSWVESKLIEKVGDLGKKLHTGRSRNDQVAVDMKMWCKVQAVVLQERIRNLQHKLVETAEANQNAVMPGYTHLQRAQPITFAHWCMAYYEMLERDFSRLTDAYKRMHTCPLGSGALAGTAYSIDRDALAQDLGFAIGTRNSLDSVSDRDHVLELLSTASISMVHLSRFAEDLIFFNSGESAFLELSDRVTSGSSLMPQKKNPDACELIRGKSGRVFGALSGLLTTLKGLPLAYNKDMQEDKEGIFDAMETWQACLEIGALVLEDINVNVERTREAAQQGYSNATELADYLVAKGIPFREAHHIVGEAVVYAISKREPLEALSVAEFKQFHPVIDEDVYPILSLESCLEKRSAKGGVNPERVREAIEAAKVNLGA.

Belongs to the lyase 1 family. Argininosuccinate lyase subfamily.

It is found in the cytoplasm. The enzyme catalyses 2-(N(omega)-L-arginino)succinate = fumarate + L-arginine. It functions in the pathway amino-acid biosynthesis; L-arginine biosynthesis; L-arginine from L-ornithine and carbamoyl phosphate: step 3/3. The polypeptide is Argininosuccinate lyase (Actinobacillus pleuropneumoniae serotype 3 (strain JL03)).